The following is a 661-amino-acid chain: Acetyl-coenzyme A synthetase (661 aa).

Residues 197-200 (RGGK) and threonine 320 contribute to the CoA site. ATP contacts are provided by residues 396–398 (GEP), 420–425 (DTWWQT), aspartate 511, and arginine 526. Serine 534 lines the CoA pocket. ATP is bound at residue arginine 537. Mg(2+) contacts are provided by valine 548 and valine 553. Lysine 620 carries the post-translational modification N6-acetyllysine.

It belongs to the ATP-dependent AMP-binding enzyme family. Requires Mg(2+) as cofactor. Post-translationally, acetylated. Deacetylation by the SIR2-homolog deacetylase activates the enzyme.

It carries out the reaction acetate + ATP + CoA = acetyl-CoA + AMP + diphosphate. Its function is as follows. Catalyzes the conversion of acetate into acetyl-CoA (AcCoA), an essential intermediate at the junction of anabolic and catabolic pathways. AcsA undergoes a two-step reaction. In the first half reaction, AcsA combines acetate with ATP to form acetyl-adenylate (AcAMP) intermediate. In the second half reaction, it can then transfer the acetyl group from AcAMP to the sulfhydryl group of CoA, forming the product AcCoA. The chain is Acetyl-coenzyme A synthetase from Leptospira interrogans serogroup Icterohaemorrhagiae serovar Lai (strain 56601).